Consider the following 200-residue polypeptide: Recombination protein RecR (200 aa).

The C4-type zinc-finger motif lies at Cys58–Cys73. Residues Asn81–Pro176 form the Toprim domain.

It belongs to the RecR family.

In terms of biological role, may play a role in DNA repair. It seems to be involved in an RecBC-independent recombinational process of DNA repair. It may act with RecF and RecO. In Desulforamulus reducens (strain ATCC BAA-1160 / DSM 100696 / MI-1) (Desulfotomaculum reducens), this protein is Recombination protein RecR.